A 143-amino-acid chain; its full sequence is Transcriptional regulator MraZ (143 aa).

2 consecutive SpoVT-AbrB domains span residues threonine 5–glutamate 47 and alanine 76–alanine 119.

This sequence belongs to the MraZ family. As to quaternary structure, forms oligomers.

It is found in the cytoplasm. The protein localises to the nucleoid. The sequence is that of Transcriptional regulator MraZ from Corynebacterium urealyticum (strain ATCC 43042 / DSM 7109).